The primary structure comprises 278 residues: Undecaprenyl-diphosphatase (278 aa).

8 consecutive transmembrane segments (helical) span residues 14–34, 40–60, 89–109, 121–141, 153–173, 196–216, 227–247, and 257–277; these read GTTEFLPISSSAHLIVLPWLF, GLAFNVALHLGTLSAVLAYFW, WAVIIGSLPAGLAGFFLNDVI, TAIVFTSLLLIVLGFVLWLAE, LGLRDGLVVGLAQALALLPGV, FSFILGIPAIAGAGLLETLKL, VLFVTGVASAAITGFLAIAFL, and SIFIVYRIALGLVLLLVVSFA.

This sequence belongs to the UppP family.

It is found in the cell membrane. It carries out the reaction di-trans,octa-cis-undecaprenyl diphosphate + H2O = di-trans,octa-cis-undecaprenyl phosphate + phosphate + H(+). In terms of biological role, catalyzes the dephosphorylation of undecaprenyl diphosphate (UPP). Confers resistance to bacitracin. The protein is Undecaprenyl-diphosphatase of Thermomicrobium roseum (strain ATCC 27502 / DSM 5159 / P-2).